The following is a 117-amino-acid chain: uncharacterized protein (117 aa).

A signal peptide spans 1–20; the sequence is MAAVHLYIISFTALMISSTS.

This is an uncharacterized protein from Saccharomyces cerevisiae (strain ATCC 204508 / S288c) (Baker's yeast).